Here is a 278-residue protein sequence, read N- to C-terminus: Sulfur carrier protein FdhD (278 aa).

Cysteine 121 functions as the Cysteine persulfide intermediate in the catalytic mechanism. 260–265 (FCKPGR) provides a ligand contact to Mo-bis(molybdopterin guanine dinucleotide).

It belongs to the FdhD family.

It is found in the cytoplasm. In terms of biological role, required for formate dehydrogenase (FDH) activity. Acts as a sulfur carrier protein that transfers sulfur from IscS to the molybdenum cofactor prior to its insertion into FDH. The chain is Sulfur carrier protein FdhD from Salmonella paratyphi A (strain ATCC 9150 / SARB42).